The primary structure comprises 426 residues: Diaminobutyrate--2-oxoglutarate transaminase (426 aa).

N6-(pyridoxal phosphate)lysine is present on Lys274.

This sequence belongs to the class-III pyridoxal-phosphate-dependent aminotransferase family. Requires pyridoxal 5'-phosphate as cofactor.

It carries out the reaction L-2,4-diaminobutanoate + 2-oxoglutarate = L-aspartate 4-semialdehyde + L-glutamate. It functions in the pathway amine and polyamine biosynthesis; ectoine biosynthesis; L-ectoine from L-aspartate 4-semialdehyde: step 1/3. Functionally, catalyzes reversively the conversion of L-aspartate beta-semialdehyde (ASA) to L-2,4-diaminobutyrate (DABA) by transamination with L-glutamate. This Oceanobacillus iheyensis (strain DSM 14371 / CIP 107618 / JCM 11309 / KCTC 3954 / HTE831) protein is Diaminobutyrate--2-oxoglutarate transaminase (ectB).